The chain runs to 217 residues: Small ribosomal subunit protein eS6 (217 aa).

This sequence belongs to the eukaryotic ribosomal protein eS6 family.

This Hyperthermus butylicus (strain DSM 5456 / JCM 9403 / PLM1-5) protein is Small ribosomal subunit protein eS6.